The sequence spans 386 residues: Putative acid--amine ligase YgiC (386 aa).

An ATP-binding site is contributed by 100–102; sequence RLD. Residues D102, E115, and N117 each contribute to the Mg(2+) site. ATP contacts are provided by residues K267, K302, G309, Q336, and 371 to 373; that span reads LIT.

The protein belongs to the glutathionylspermidine synthase preATP-grasp family.

Functionally, may be a ligase forming an amide bond. Shows ATPase activity. In Escherichia coli O157:H7, this protein is Putative acid--amine ligase YgiC (ygiC).